A 337-amino-acid chain; its full sequence is Biotin synthase (337 aa).

The 226-residue stretch at 58–283 (PEVEVEGIIS…RTILRFAGGR (226 aa)) folds into the Radical SAM core domain. [4Fe-4S] cluster contacts are provided by C73, C77, and C80. [2Fe-2S] cluster-binding residues include C116, C149, C208, and R278.

It belongs to the radical SAM superfamily. Biotin synthase family. As to quaternary structure, homodimer. The cofactor is [4Fe-4S] cluster. Requires [2Fe-2S] cluster as cofactor.

The enzyme catalyses (4R,5S)-dethiobiotin + (sulfur carrier)-SH + 2 reduced [2Fe-2S]-[ferredoxin] + 2 S-adenosyl-L-methionine = (sulfur carrier)-H + biotin + 2 5'-deoxyadenosine + 2 L-methionine + 2 oxidized [2Fe-2S]-[ferredoxin]. Its pathway is cofactor biosynthesis; biotin biosynthesis; biotin from 7,8-diaminononanoate: step 2/2. Functionally, catalyzes the conversion of dethiobiotin (DTB) to biotin by the insertion of a sulfur atom into dethiobiotin via a radical-based mechanism. This is Biotin synthase from Rhodococcus jostii (strain RHA1).